Here is a 511-residue protein sequence, read N- to C-terminus: MSDHEEESHGASPTSPASSGASSPLAPISPRSEGNAPESPSGDVQDIYKDESFEAPASPARDSSAPASPSAASPAGSRSPSPSPVKTKSKVMIDSDEDSDAEESANKRALIDSDASDAEGKKRRVMLDSDDSDHEGTSKKEPTTKNLFGDDSDDDDEDRPKKTNDLDEFVEGRDEEESQETSKPAYDSDDDDGPVDRHGRHFEWDFDKMLAEKKAERKKKTRRGGKDGGIDIINDDDGTVSRLVERMKHAAKSDRNANIERKPAFQKIKMLPEVKAIMLRAGIVEVLIENGFMSALSEWLAPLPDKCLPALDIRITVLKLLHNPRFWKLDRSTLKQSGLGKAVMMLYKHPNETKENKGIANKLIGEWARPIYHLDTDYSTVSRQEREERDYSRMPEKRKKKINSRDEEEPNDDDQPKRPRIRDADEMGPTKSDDLKPGDKGYIPRARVPKPSTKDYVIRPEWRVTGAFKGEKKSTGNNRYDQTFRDFQERTKKSKANRIVKVSLEGRNMGI.

The tract at residues 1–200 is disordered; it reads MSDHEEESHG…DDGPVDRHGR (200 aa). Composition is skewed to low complexity over residues 11-30 and 55-86; these read ASPT…PISP and APAS…SPVK. The segment covering 94–103 has biased composition (acidic residues); it reads DSDEDSDAEE. The span at 134–143 shows a compositional bias: basic and acidic residues; it reads HEGTSKKEPT. The span at 166–179 shows a compositional bias: acidic residues; it reads LDEFVEGRDEEESQ. A TFIIS N-terminal domain is found at 294–374; it reads SALSEWLAPL…GEWARPIYHL (81 aa). A disordered region spans residues 382-454; it reads SRQEREERDY…RARVPKPSTK (73 aa). 2 stretches are compositionally biased toward basic and acidic residues: residues 383–395 and 414–425; these read RQER…SRMP and DQPKRPRIRDAD.

It belongs to the IWS1 family.

Its subcellular location is the nucleus. This Caenorhabditis elegans protein is IWS1-like protein.